A 329-amino-acid polypeptide reads, in one-letter code: Serpentine receptor class alpha-7 (329 aa).

The next 7 helical transmembrane spans lie at 25 to 45, 57 to 77, 104 to 124, 143 to 163, 187 to 207, 237 to 257, and 273 to 293; these read YVYL…VKIV, ILLF…LFSA, YLKV…GLLL, VGIA…KIII, RLFA…SVLL, TICF…FGIF, and FIVV…ILLV.

Belongs to the nematode receptor-like protein sra family.

It is found in the membrane. The protein is Serpentine receptor class alpha-7 (sra-7) of Caenorhabditis elegans.